Consider the following 340-residue polypeptide: Uridine nucleosidase (340 aa).

His-254 is a catalytic residue.

The protein belongs to the IUNH family.

It localises to the cytoplasm. Its subcellular location is the nucleus. It carries out the reaction uridine + H2O = D-ribose + uracil. Also acts on cytidine. The polypeptide is Uridine nucleosidase (URH1) (Saccharomyces cerevisiae (strain ATCC 204508 / S288c) (Baker's yeast)).